Here is a 204-residue protein sequence, read N- to C-terminus: Somatotropin (204 aa).

The first 17 residues, 1-17 (MDKVLFLLFVLSLGVSS), serve as a signal peptide directing secretion. Gln-18 bears the Pyrrolidone carboxylic acid mark. His-36 is a binding site for Zn(2+). Cys-69 and Cys-177 are oxidised to a cystine. Glu-186 contributes to the Zn(2+) binding site. A disulfide bridge connects residues Cys-194 and Cys-202.

This sequence belongs to the somatotropin/prolactin family.

The protein resides in the secreted. Growth hormone plays an important role in growth control and is involved in the regulation of several anabolic processes. Implicated as an osmoregulatory substance important for seawater adaptation. The sequence is that of Somatotropin (gh) from Trichopodus trichopterus (Three spot gourami).